The primary structure comprises 88 residues: Small ribosomal subunit protein bS20 (88 aa).

The disordered stretch occupies residues 69–88 (KNTASRKKSRLTKRFNKLTG). Over residues 71–88 (TASRKKSRLTKRFNKLTG) the composition is skewed to basic residues.

Belongs to the bacterial ribosomal protein bS20 family.

Its function is as follows. Binds directly to 16S ribosomal RNA. The protein is Small ribosomal subunit protein bS20 of Pelotomaculum thermopropionicum (strain DSM 13744 / JCM 10971 / SI).